A 909-amino-acid polypeptide reads, in one-letter code: UPF0182 protein Moth_1139 (909 aa).

7 helical membrane-spanning segments follow: residues phenylalanine 8–leucine 28, valine 51–phenylalanine 71, leucine 103–alanine 123, leucine 165–asparagine 185, leucine 201–leucine 221, leucine 245–leucine 265, and alanine 277–valine 297. Positions proline 843–asparagine 862 are disordered.

Belongs to the UPF0182 family.

The protein resides in the cell membrane. The chain is UPF0182 protein Moth_1139 from Moorella thermoacetica (strain ATCC 39073 / JCM 9320).